The primary structure comprises 889 residues: Protein SEY1 homolog (889 aa).

At 1 to 801 (MDTKTQIIDY…ETGAKMSLKN (801 aa)) the chain is on the cytoplasmic side. The GB1/RHD3-type G domain occupies 31 to 277 (GFNYNVIAIL…IPSDGFAHYC (247 aa)). GTP is bound at residue 41–48 (GSQSSGKS). The segment at 429–449 (RKDGKGGSSPSAGDKKDTKDT) is disordered. Residues 679 to 699 (LDEIMDVLKSKLDEISDNLSS) are a coiled coil. Residues 802–822 (VPLFFWVILLILGWNELLFFT) form a helical membrane-spanning segment. Over 823 to 825 (RFF) the chain is Lumenal. A helical transmembrane segment spans residues 826–846 (FRLNIILPLFLAAAVILSTLV). Residues 847–889 (FNGNMEVLSIINKAVFFLAKNSFGVYRQLQAMGGKAAQGAAAD) are Cytoplasmic-facing.

It belongs to the TRAFAC class dynamin-like GTPase superfamily. GB1/RHD3 GTPase family. RHD3 subfamily.

It is found in the endoplasmic reticulum membrane. Probable GTP-binding protein involved in generating and maintaining the structure of the tubular endoplasmic reticulum network. The chain is Protein SEY1 homolog from Plasmodium vivax (strain Salvador I).